A 176-amino-acid chain; its full sequence is Ribosome maturation factor RimM (176 aa).

The PRC barrel domain occupies 101-173 (EGEYYHYRLI…RMVVDLPEGL (73 aa)).

The protein belongs to the RimM family. In terms of assembly, binds ribosomal protein uS19.

It localises to the cytoplasm. An accessory protein needed during the final step in the assembly of 30S ribosomal subunit, possibly for assembly of the head region. Essential for efficient processing of 16S rRNA. May be needed both before and after RbfA during the maturation of 16S rRNA. It has affinity for free ribosomal 30S subunits but not for 70S ribosomes. This is Ribosome maturation factor RimM from Syntrophobacter fumaroxidans (strain DSM 10017 / MPOB).